Reading from the N-terminus, the 161-residue chain is Endoribonuclease YbeY (161 aa).

Zn(2+) contacts are provided by His121, His125, and His131.

The protein belongs to the endoribonuclease YbeY family. Zn(2+) is required as a cofactor.

The protein localises to the cytoplasm. Its function is as follows. Single strand-specific metallo-endoribonuclease involved in late-stage 70S ribosome quality control and in maturation of the 3' terminus of the 16S rRNA. This Xanthomonas oryzae pv. oryzae (strain MAFF 311018) protein is Endoribonuclease YbeY.